Reading from the N-terminus, the 144-residue chain is Large ribosomal subunit protein uL15 (144 aa).

The span at 1 to 10 (MYLNTISPSR) shows a compositional bias: polar residues. A disordered region spans residues 1-51 (MYLNTISPSRGSKHLSKRVGRGIGSGLGKTGGRGHKGQKSRSGGKVRLGFE). Residues 11-20 (GSKHLSKRVG) show a composition bias toward basic residues. Residues 21–31 (RGIGSGLGKTG) are compositionally biased toward gly residues. Residues 32–44 (GRGHKGQKSRSGG) are compositionally biased toward basic residues.

The protein belongs to the universal ribosomal protein uL15 family. Part of the 50S ribosomal subunit.

Binds to the 23S rRNA. The protein is Large ribosomal subunit protein uL15 of Blochmanniella pennsylvanica (strain BPEN).